The primary structure comprises 437 residues: Glutamyl-tRNA reductase (437 aa).

Residues 49 to 52 (TCNR), S109, 114 to 116 (ETQ), and Q120 contribute to the substrate site. C50 (nucleophile) is an active-site residue. Residue 189 to 194 (GAGEMS) participates in NADP(+) binding.

This sequence belongs to the glutamyl-tRNA reductase family. Homodimer.

The catalysed reaction is (S)-4-amino-5-oxopentanoate + tRNA(Glu) + NADP(+) = L-glutamyl-tRNA(Glu) + NADPH + H(+). It participates in porphyrin-containing compound metabolism; protoporphyrin-IX biosynthesis; 5-aminolevulinate from L-glutamyl-tRNA(Glu): step 1/2. Its function is as follows. Catalyzes the NADPH-dependent reduction of glutamyl-tRNA(Glu) to glutamate 1-semialdehyde (GSA). This is Glutamyl-tRNA reductase from Listeria welshimeri serovar 6b (strain ATCC 35897 / DSM 20650 / CCUG 15529 / CIP 8149 / NCTC 11857 / SLCC 5334 / V8).